Reading from the N-terminus, the 260-residue chain is MNQQLVPAIKVKDLSFYYNTSKAIEGISMDIYRNKVTAIIGPSGCGKSTFIKTLNRISELEGPVKVEGVVDFFGQNIYDPRININRLRRQIGMVFQRPNPFPMSIYENVAYGVRISAKLPQADLDEIVESALKGAALWQEVKDKLNKSALGLSGGQQQRLCIARALAIKPKVLLMDEPCSALDPIATMKVEELIHSLRSELTIAIVTHNMQQATRVSDFTAFFSTDESRIGQMVEFGVTTQIFSNPLDSRTRDYVSGRFG.

The ABC transporter domain maps to 9-255; sequence IKVKDLSFYY…PLDSRTRDYV (247 aa). 41 to 48 provides a ligand contact to ATP; the sequence is GPSGCGKS.

This sequence belongs to the ABC transporter superfamily. Phosphate importer (TC 3.A.1.7) family. In terms of assembly, the complex is composed of two ATP-binding proteins (PstB), two transmembrane proteins (PstC and PstA) and a solute-binding protein (PstS).

It localises to the cell inner membrane. It catalyses the reaction phosphate(out) + ATP + H2O = ADP + 2 phosphate(in) + H(+). Its function is as follows. Part of the ABC transporter complex PstSACB involved in phosphate import. Responsible for energy coupling to the transport system. The sequence is that of Phosphate import ATP-binding protein PstB 2 from Nostoc sp. (strain PCC 7120 / SAG 25.82 / UTEX 2576).